The sequence spans 282 residues: 4-hydroxy-3-methylbut-2-enyl diphosphate reductase (282 aa).

C12 contributes to the [4Fe-4S] cluster binding site. 2 residues coordinate (2E)-4-hydroxy-3-methylbut-2-enyl diphosphate: H40 and H72. Dimethylallyl diphosphate contacts are provided by H40 and H72. 2 residues coordinate isopentenyl diphosphate: H40 and H72. Residue C94 coordinates [4Fe-4S] cluster. Residue H122 participates in (2E)-4-hydroxy-3-methylbut-2-enyl diphosphate binding. H122 is a dimethylallyl diphosphate binding site. Isopentenyl diphosphate is bound at residue H122. E124 acts as the Proton donor in catalysis. Residue T160 participates in (2E)-4-hydroxy-3-methylbut-2-enyl diphosphate binding. C188 is a [4Fe-4S] cluster binding site. (2E)-4-hydroxy-3-methylbut-2-enyl diphosphate is bound by residues S216, N218, and S260. Dimethylallyl diphosphate-binding residues include S216, N218, and S260. Residues S216, N218, and S260 each contribute to the isopentenyl diphosphate site.

It belongs to the IspH family. It depends on [4Fe-4S] cluster as a cofactor.

The enzyme catalyses isopentenyl diphosphate + 2 oxidized [2Fe-2S]-[ferredoxin] + H2O = (2E)-4-hydroxy-3-methylbut-2-enyl diphosphate + 2 reduced [2Fe-2S]-[ferredoxin] + 2 H(+). It catalyses the reaction dimethylallyl diphosphate + 2 oxidized [2Fe-2S]-[ferredoxin] + H2O = (2E)-4-hydroxy-3-methylbut-2-enyl diphosphate + 2 reduced [2Fe-2S]-[ferredoxin] + 2 H(+). It participates in isoprenoid biosynthesis; dimethylallyl diphosphate biosynthesis; dimethylallyl diphosphate from (2E)-4-hydroxy-3-methylbutenyl diphosphate: step 1/1. Its pathway is isoprenoid biosynthesis; isopentenyl diphosphate biosynthesis via DXP pathway; isopentenyl diphosphate from 1-deoxy-D-xylulose 5-phosphate: step 6/6. In terms of biological role, catalyzes the conversion of 1-hydroxy-2-methyl-2-(E)-butenyl 4-diphosphate (HMBPP) into a mixture of isopentenyl diphosphate (IPP) and dimethylallyl diphosphate (DMAPP). Acts in the terminal step of the DOXP/MEP pathway for isoprenoid precursor biosynthesis. This is 4-hydroxy-3-methylbut-2-enyl diphosphate reductase from Geotalea uraniireducens (strain Rf4) (Geobacter uraniireducens).